The chain runs to 483 residues: Regulatory protein ViaA (483 aa).

It belongs to the ViaA family. In terms of assembly, homodimer. Interacts with RavA.

It localises to the cytoplasm. Its function is as follows. Component of the RavA-ViaA chaperone complex, which may act on the membrane to optimize the function of some of the respiratory chains. ViaA stimulates the ATPase activity of RavA. This is Regulatory protein ViaA from Escherichia coli O81 (strain ED1a).